Here is a 92-residue protein sequence, read N- to C-terminus: Small ribosomal subunit protein uS19 (92 aa).

This sequence belongs to the universal ribosomal protein uS19 family.

Its function is as follows. Protein S19 forms a complex with S13 that binds strongly to the 16S ribosomal RNA. The polypeptide is Small ribosomal subunit protein uS19 (Enterococcus faecalis (strain ATCC 700802 / V583)).